The following is a 277-amino-acid chain: Large ribosomal subunit protein uL2c (277 aa).

The tract at residues 224 to 257 is disordered; sequence VMNPIDHPHGGGEGRAPIGRKKPLTPWGHPALGR.

Belongs to the universal ribosomal protein uL2 family. As to quaternary structure, part of the 50S ribosomal subunit.

It is found in the plastid. It localises to the chloroplast. In Anthoceros angustus (Hornwort), this protein is Large ribosomal subunit protein uL2c (rpl2).